A 445-amino-acid polypeptide reads, in one-letter code: Guanosine nucleotide diphosphate dissociation inhibitor 1 (445 aa).

This sequence belongs to the Rab GDI family. As to quaternary structure, interacts with the GDP-bound form of RABA5C (via C-terminus). Expressed in roots, rosette leaves, stems, floral buds and siliques.

Its function is as follows. Regulates the GDP/GTP exchange reaction of most RAB proteins by inhibiting the dissociation of GDP from them, and the subsequent binding of GTP. This Arabidopsis thaliana (Mouse-ear cress) protein is Guanosine nucleotide diphosphate dissociation inhibitor 1 (GDI1).